Consider the following 141-residue polypeptide: Hemoglobin subunit alpha-A (141 aa).

A Globin domain is found at 1–141; that stretch reads VLSSHDKSNV…VGTVLTAKYR (141 aa). His58 provides a ligand contact to O2. Position 87 (His87) interacts with heme b.

This sequence belongs to the globin family. As to quaternary structure, heterotetramer of two alpha chains and two beta chains. Red blood cells.

Functionally, involved in oxygen transport from the lung to the various peripheral tissues. This Phoenicopterus ruber (American flamingo) protein is Hemoglobin subunit alpha-A (HBAA).